The chain runs to 242 residues: tRNA (guanine-N(1)-)-methyltransferase (242 aa).

Residues Gly109 and 129-134 each bind S-adenosyl-L-methionine; that span reads LGDFVL.

It belongs to the RNA methyltransferase TrmD family. In terms of assembly, homodimer.

It is found in the cytoplasm. It carries out the reaction guanosine(37) in tRNA + S-adenosyl-L-methionine = N(1)-methylguanosine(37) in tRNA + S-adenosyl-L-homocysteine + H(+). Its function is as follows. Specifically methylates guanosine-37 in various tRNAs. The polypeptide is tRNA (guanine-N(1)-)-methyltransferase (Exiguobacterium sibiricum (strain DSM 17290 / CCUG 55495 / CIP 109462 / JCM 13490 / 255-15)).